A 238-amino-acid chain; its full sequence is IIGGDECNINEHRFLVALYTPRSRTLFCGGTLINQEWVLTAAHCDRKNFRIKLGMHSKKVPNKDEQTRVPKEKFFCLSSKNYTLWDKDIMLIRLDSPVKNSTHIEPFSLPSSPPSVGSVCRIMGWGRISPTEETFPDVPHCVNINLLEYEMCRAPYPEFELPATSRTLCAGILEGGKDTCRGDSGGPLICNGQFQGIASWGDDPCAQPHKPAAYTKVFDHLDWIKSIIAGNTDASCPP.

Residues 1 to 229 (IIGGDECNIN…HLDWIKSIIA (229 aa)) form the Peptidase S1 domain. Cystine bridges form between C7–C141, C28–C44, C76–C236, C120–C190, C152–C169, and C180–C205. H43 (charge relay system) is an active-site residue. N-linked (GlcNAc...) asparagine glycosylation occurs at N81. D88 functions as the Charge relay system in the catalytic mechanism. N100 carries N-linked (GlcNAc...) asparagine glycosylation. Catalysis depends on S184, which acts as the Charge relay system.

It belongs to the peptidase S1 family. Snake venom subfamily. In terms of assembly, monomer. As to expression, expressed by the venom gland.

The protein localises to the secreted. With respect to regulation, inhibited by diisopropylfluorophosphate (DFP), PMSF and leupeptin. Thrombin-like snake venom serine protease. Cleaves fibrinogen (beta chain of fibrinogen (FGB) and more slowly alpha chain (FGA)) without inducing fibrin clotting and cleaves kininogen to produce bradykinin (KNG), resulting in the reduction of blood pressure. In Gloydius blomhoffii (Mamushi), this protein is Thrombin-like enzyme halystase.